A 396-amino-acid polypeptide reads, in one-letter code: Carbamoyl phosphate synthase small chain (396 aa).

The tract at residues 1 to 204 (MTQHDNDPAW…WDKGFGQQDK (204 aa)) is CPSase. Ser59, Gly256, and Gly258 together coordinate L-glutamine. In terms of domain architecture, Glutamine amidotransferase type-1 spans 208–396 (NVVAIDYGIK…AELMRQKKSA (189 aa)). The active-site Nucleophile is the Cys285. Leu286, Gln289, Asn327, Gly329, and Phe330 together coordinate L-glutamine. Residues His369 and Glu371 contribute to the active site.

This sequence belongs to the CarA family. Composed of two chains; the small (or glutamine) chain promotes the hydrolysis of glutamine to ammonia, which is used by the large (or ammonia) chain to synthesize carbamoyl phosphate. Tetramer of heterodimers (alpha,beta)4.

It catalyses the reaction hydrogencarbonate + L-glutamine + 2 ATP + H2O = carbamoyl phosphate + L-glutamate + 2 ADP + phosphate + 2 H(+). It carries out the reaction L-glutamine + H2O = L-glutamate + NH4(+). It functions in the pathway amino-acid biosynthesis; L-arginine biosynthesis; carbamoyl phosphate from bicarbonate: step 1/1. Its pathway is pyrimidine metabolism; UMP biosynthesis via de novo pathway; (S)-dihydroorotate from bicarbonate: step 1/3. Its function is as follows. Small subunit of the glutamine-dependent carbamoyl phosphate synthetase (CPSase). CPSase catalyzes the formation of carbamoyl phosphate from the ammonia moiety of glutamine, carbonate, and phosphate donated by ATP, constituting the first step of 2 biosynthetic pathways, one leading to arginine and/or urea and the other to pyrimidine nucleotides. The small subunit (glutamine amidotransferase) binds and cleaves glutamine to supply the large subunit with the substrate ammonia. In Bradyrhizobium diazoefficiens (strain JCM 10833 / BCRC 13528 / IAM 13628 / NBRC 14792 / USDA 110), this protein is Carbamoyl phosphate synthase small chain.